We begin with the raw amino-acid sequence, 93 residues long: Cell division protein CrgA (93 aa).

2 helical membrane passes run 31–51 (VWFV…LMVF) and 70–90 (LGPW…LLTM).

The protein belongs to the CrgA family.

The protein resides in the cell membrane. Functionally, involved in cell division. The sequence is that of Cell division protein CrgA from Mycobacterium leprae (strain Br4923).